The following is a 55-amino-acid chain: Large ribosomal subunit protein bL32 (55 aa).

A disordered region spans residues 1 to 27 (MAVQQNKPTRSKRGMRRSHDALTTATL).

This sequence belongs to the bacterial ribosomal protein bL32 family.

This is Large ribosomal subunit protein bL32 from Yersinia enterocolitica serotype O:8 / biotype 1B (strain NCTC 13174 / 8081).